The sequence spans 559 residues: 3-aminoavenalumate diazotase (559 aa).

Position 181 (serine 181) interacts with Mg(2+). Residues alanine 227, glycine 332, and serine 336 each coordinate ATP. Glutamate 337 lines the Mg(2+) pocket. Residues aspartate 416 and arginine 437 each contribute to the ATP site.

This sequence belongs to the ATP-dependent AMP-binding enzyme family. The cofactor is Mg(2+).

It catalyses the reaction 3-aminoavenalumate + nitrite + ATP = 3-diazoavenalumate + AMP + diphosphate + H2O. The catalysed reaction is (E)-3-aminocoumarate + nitrite + ATP + H(+) = (E)-3-diazocoumarate + AMP + diphosphate + H2O. It carries out the reaction 3-amino-4-hydroxybenzoate + nitrite + ATP + H(+) = 3-diazo-4-hydroxybenzoate + AMP + diphosphate + H2O. Its function is as follows. Ligase involved in the biosynthesis of avenalumic acid (AVA). Catalyzes the diazotization of 3-aminoavenalumic acid (3-AAA) to 3-diazoavenalumic acid (3-DAA). It can also act on 3-aminocoumaric acid (3-ACA) and 3-amino-4-hydroxybenzoic acid (3,4-AHBA) with lower activity. In Streptomyces sp, this protein is 3-aminoavenalumate diazotase.